Reading from the N-terminus, the 562-residue chain is MILTENLNVLWASVLFETLYRLGLRTVVLSPGSRSGPLAIAAAAHPHLEALPILDERSAAFFALGLVQQQGRPVALLCTSGTAAANFYPAIIEASLSHLPLIVLSADRPPELRFCQAGQAIDQVHLYGHAVRHYRELSLPELPLLPYLRQTLCHSWQTALWPDPGPVHLNIPLRDPLDLRSQANFHGELPKGFFDQVQPFVPPRVVTSLPWQTWQQMQRGLIIAGPSHGVDPLAEAAAIDRLSRFLQWPVLADALSSARGLPHGISHYDLLLRDAHLREYLRPEAVIQLGPLPTSKALREWLSACDPLIWCLDPTGDNNNPLHGRCQMLAIAPQAVDCPPDPLPPNPYLKDWQDQDQRVREQLKRTFEAIDWFSEVKLIYHLPQWLPSQTAIFVASSMPVRDVESVWQGSDRRHRFYFNRGANGIDGTLSTALGVAHRGQPTLLITGDLACLHDTNGWLITPQFQGCLTVLLINNRGGGIFEHLPIRQFDPPFEAFFATPQQVDFSYLAAAYGIPYHCLKDWADVEAQLRQTPWPKIRLLEFRSDRHRNAQWRQQVLAHLGG.

The protein belongs to the TPP enzyme family. MenD subfamily. In terms of assembly, homodimer. Mg(2+) is required as a cofactor. The cofactor is Mn(2+). Thiamine diphosphate serves as cofactor.

The enzyme catalyses isochorismate + 2-oxoglutarate + H(+) = 5-enolpyruvoyl-6-hydroxy-2-succinyl-cyclohex-3-ene-1-carboxylate + CO2. The protein operates within quinol/quinone metabolism; 1,4-dihydroxy-2-naphthoate biosynthesis; 1,4-dihydroxy-2-naphthoate from chorismate: step 2/7. It functions in the pathway cofactor biosynthesis; phylloquinone biosynthesis. Catalyzes the thiamine diphosphate-dependent decarboxylation of 2-oxoglutarate and the subsequent addition of the resulting succinic semialdehyde-thiamine pyrophosphate anion to isochorismate to yield 2-succinyl-5-enolpyruvyl-6-hydroxy-3-cyclohexene-1-carboxylate (SEPHCHC). The protein is 2-succinyl-5-enolpyruvyl-6-hydroxy-3-cyclohexene-1-carboxylate synthase of Thermosynechococcus vestitus (strain NIES-2133 / IAM M-273 / BP-1).